We begin with the raw amino-acid sequence, 98 residues long: NADH-ubiquinone oxidoreductase chain 4L (98 aa).

Transmembrane regions (helical) follow at residues 1-21 (MTPVHFSFTSAFILGLMGLAF), 29-49 (ALLCLEGMMLSLFIALSLWAL), and 58-78 (VAPMLLLAFSACEASAGLALL).

It belongs to the complex I subunit 4L family.

The protein resides in the mitochondrion membrane. It catalyses the reaction a ubiquinone + NADH + 5 H(+)(in) = a ubiquinol + NAD(+) + 4 H(+)(out). Core subunit of the mitochondrial membrane respiratory chain NADH dehydrogenase (Complex I) which catalyzes electron transfer from NADH through the respiratory chain, using ubiquinone as an electron acceptor. Part of the enzyme membrane arm which is embedded in the lipid bilayer and involved in proton translocation. The protein is NADH-ubiquinone oxidoreductase chain 4L (MT-ND4L) of Oncorhynchus clarkii (Cutthroat trout).